Reading from the N-terminus, the 113-residue chain is Nucleoid-associated protein FMG_0513 (113 aa).

Residues 1 to 44 (MGNKFRGGMPGMGNMGNMMKQMQKMQRQMEETQKRLEETEVTAT) form a disordered region. Residues 15–26 (MGNMMKQMQKMQ) are compositionally biased toward low complexity. Residues 27–38 (RQMEETQKRLEE) are compositionally biased toward basic and acidic residues.

This sequence belongs to the YbaB/EbfC family. In terms of assembly, homodimer.

Its subcellular location is the cytoplasm. It localises to the nucleoid. Functionally, binds to DNA and alters its conformation. May be involved in regulation of gene expression, nucleoid organization and DNA protection. The polypeptide is Nucleoid-associated protein FMG_0513 (Finegoldia magna (strain ATCC 29328 / DSM 20472 / WAL 2508) (Peptostreptococcus magnus)).